Reading from the N-terminus, the 205-residue chain is Protein Nef (205 aa).

A lipid anchor (N-myristoyl glycine; by host) is attached at Gly2. Ser6 bears the Phosphoserine; by host mark. Residues 62-65 (DNEE) form an acidic; interacts with host PACS1 and PACS2; stabilizes the interaction of NEF/MHC-I with host AP1M1; necessary for MHC-I internalization region. The segment at 69–78 (PVRPQVPTRP) is SH3-binding; interaction with Src family tyrosine kinases. The short motif at 72 to 75 (PQVP) is the PxxP; stabilizes the interaction of NEF/MHC-I with host AP1M1; necessary for MHC-I internalization element. The interval 108-124 (EILDLWVYHTQGFFPDW) is mediates dimerization, Nef-PTE1 interaction. The tract at residues 148–180 (LTEEQVEQANEGDNNCLLHPICQHGMEDEDKEV) is binding to ATP6V1H. The short motif at 164–165 (LL) is the Dileucine internalization motif; necessary for CD4 internalization element. Positions 174-175 (ED) match the Diacidic; necessary for CD4 internalization motif.

This sequence belongs to the lentivirus primate group Nef protein family. Monomer; cytosolic form. Homodimer; membrane bound form. Interacts with Nef associated p21-activated kinase (PAK2); this interaction activates PAK2. Associates with the Nef-MHC-I-AP1 complex; this complex is required for MHC-I internalization. Interacts (via C-terminus) with host PI3-kinase. Interacts with host PACS1; this interaction seems to be weak. Interacts with host PACS2. Interacts with host LCK and MAPK3; these interactions inhibit the kinase activity of the latter. Interacts with host ATP6V1H; this interaction may play a role in CD4 endocytosis. Associates with the CD4-Nef-AP2 complex; this complex is required for CD4 internalization. Interacts with host AP2 subunit alpha and AP2 subunit sigma2. Interacts with TCR-zeta chain; this interaction up-regulates the Fas ligand (FasL) surface expression. Interacts with host HCK, LYN, and SRC; these interactions activate the Src family kinases. Interacts with MAP3K5; this interaction inhibits the Fas and TNFR-mediated death signals. Interacts with beta-COP and PTE1. Interacts with human RACK1; this increases Nef phosphorylation by PKC. Interacts with TP53; this interaction decreases the half-life of TP53, protecting the infected cell against p53-mediated apoptosis. In terms of processing, the virion-associated Nef proteins are cleaved by the viral protease to release the soluble C-terminal core protein. Nef is probably cleaved concomitantly with viral structural proteins on maturation of virus particles. Post-translationally, myristoylated. Phosphorylated on serine residues, probably by host PKCdelta and theta.

It localises to the host cell membrane. The protein localises to the virion. It is found in the secreted. Its subcellular location is the host Golgi apparatus membrane. Factor of infectivity and pathogenicity, required for optimal virus replication. Alters numerous pathways of T-lymphocyte function and down-regulates immunity surface molecules in order to evade host defense and increase viral infectivity. Alters the functionality of other immunity cells, like dendritic cells, monocytes/macrophages and NK cells. In terms of biological role, in infected CD4(+) T-lymphocytes, down-regulates the surface MHC-I, mature MHC-II, CD4, CD28, CCR5 and CXCR4 molecules. Mediates internalization and degradation of host CD4 through the interaction of with the cytoplasmic tail of CD4, the recruitment of AP-2 (clathrin adapter protein complex 2), internalization through clathrin coated pits, and subsequent transport to endosomes and lysosomes for degradation. Diverts host MHC-I molecules to the trans-Golgi network-associated endosomal compartments by an endocytic pathway to finally target them for degradation. MHC-I down-regulation may involve AP-1 (clathrin adapter protein complex 1) or possibly Src family kinase-ZAP70/Syk-PI3K cascade recruited by PACS2. In consequence infected cells are masked for immune recognition by cytotoxic T-lymphocytes. Decreasing the number of immune receptors also prevents reinfection by more HIV particles (superinfection). Down-regulates host SERINC3 and SERINC5 thereby excluding these proteins from the viral particles. Virion infectivity is drastically higher when SERINC3 or SERINC5 are excluded from the viral envelope, because these host antiviral proteins impair the membrane fusion event necessary for subsequent virion penetration. Its function is as follows. Bypasses host T-cell signaling by inducing a transcriptional program nearly identical to that of anti-CD3 cell activation. Interaction with TCR-zeta chain up-regulates the Fas ligand (FasL). Increasing surface FasL molecules and decreasing surface MHC-I molecules on infected CD4(+) cells send attacking cytotoxic CD8+ T-lymphocytes into apoptosis. Functionally, plays a role in optimizing the host cell environment for viral replication without causing cell death by apoptosis. Protects the infected cells from apoptosis in order to keep them alive until the next virus generation is ready to strike. Inhibits the Fas and TNFR-mediated death signals by blocking MAP3K5/ASK1. Decreases the half-life of TP53, protecting the infected cell against p53-mediated apoptosis. Inhibits the apoptotic signals regulated by the Bcl-2 family proteins through the formation of a Nef/PI3-kinase/PAK2 complex that leads to activation of PAK2 and induces phosphorylation of host BAD. Extracellular Nef protein targets CD4(+) T-lymphocytes for apoptosis by interacting with CXCR4 surface receptors. The sequence is that of Protein Nef from Simian immunodeficiency virus (isolate CPZ GAB1) (SIV-cpz).